The primary structure comprises 315 residues: Zinc metalloproteinase nas-4 (315 aa).

Residues 1-20 form the signal peptide; it reads MMTIQRYSLVFCAIFATCWT. Asparagine 71 carries N-linked (GlcNAc...) asparagine glycosylation. Positions 95-290 constitute a Peptidase M12A domain; sequence NAIKQIYRRW…RKINKLYNCP (196 aa). Disulfide bonds link cysteine 137–cysteine 289 and cysteine 160–cysteine 179. Position 187 (histidine 187) interacts with Zn(2+). The active site involves glutamate 188. 2 residues coordinate Zn(2+): histidine 191 and histidine 197. The tract at residues 291–315 is disordered; it reads GVSGNNNNNNNNQINSNSIVNHPQV.

The cofactor is Zn(2+). As to expression, digestive tract. Found in the pharynx cells of the procorpus, metacorpus, isthmus and terminal bulb, and in the terminal bulb lumen.

It is found in the secreted. Its function is as follows. Metalloprotease. May be involved in digestion. This is Zinc metalloproteinase nas-4 (nas-4) from Caenorhabditis elegans.